We begin with the raw amino-acid sequence, 1133 residues long: SH3 and PX domain-containing protein 2A (1133 aa).

The region spanning Y4 to V128 is the PX domain. One can recognise an SH3 1 domain in the interval M166–G225. T256 carries the phosphothreonine modification. The SH3 2 domain occupies S266–D325. Phosphoserine occurs at positions 406 and 421. Disordered stretches follow at residues Q415–P446, R505–G840, N899–D924, and Q941–P964. An SH3 3 domain is found at S448–K507. Positions D546–E555 are enriched in basic and acidic residues. Residues S547 and S567 each carry the phosphoserine modification. Positions S567–V576 are enriched in acidic residues. Residues E577–P586 are compositionally biased toward basic and acidic residues. S593 is modified (phosphoserine). The segment covering S608–Y620 has biased composition (acidic residues). Low complexity-rich tracts occupy residues S634–L652, P658–K670, and S686–S715. At S644 the chain carries Phosphoserine. Phosphothreonine is present on T731. Phosphoserine is present on residues S767, S769, and S819. T829 carries the phosphothreonine modification. The 60-residue stretch at G840–N899 folds into the SH3 4 domain. The stretch at R917 to T946 forms a coiled coil. Phosphoserine is present on residues S1002, S1016, S1017, and S1038. Residues K1029–R1059 are disordered. The SH3 5 domain maps to N1072–N1133.

This sequence belongs to the SH3PXD2 family. In terms of assembly, interacts (via N-terminus) with CYBA. Interacts with ADAM12, ADAM15 and ADAM19. Interacts with NOXO1. Interacts (via SH3 domains) with NOXA1. Interacts with FASLG. Interacts (via PX domain) with RAB40B (GTP-bound); interaction promotes invadopodia-mediated extracellular matrix degradation. Tyrosine phosphorylated by SRC. Phosphorylation plays a regulatory role in the protein localization. The intramolecular interaction of the PX domain with the third SH3 domain maintains the protein in the cytoplasm and phosphorylation disrupts this interaction, resulting in the redistribution of the protein from cytoplasm to the perimembrane region. Phosphorylated on serine upon DNA damage, probably by ATM or ATR. In terms of tissue distribution, found in several cancer cell lines, particularly invasive breast carcinomas and melanomas.

Its subcellular location is the cytoplasm. It is found in the cell projection. The protein resides in the podosome. Its function is as follows. Adapter protein involved in invadopodia and podosome formation, extracellular matrix degradation and invasiveness of some cancer cells. Binds matrix metalloproteinases (ADAMs), NADPH oxidases (NOXs) and phosphoinositides. Acts as an organizer protein that allows NOX1- or NOX3-dependent reactive oxygen species (ROS) generation and ROS localization. In association with ADAM12, mediates the neurotoxic effect of amyloid-beta peptide. The sequence is that of SH3 and PX domain-containing protein 2A from Homo sapiens (Human).